The primary structure comprises 160 residues: SsrA-binding protein (160 aa).

The protein belongs to the SmpB family.

Its subcellular location is the cytoplasm. In terms of biological role, required for rescue of stalled ribosomes mediated by trans-translation. Binds to transfer-messenger RNA (tmRNA), required for stable association of tmRNA with ribosomes. tmRNA and SmpB together mimic tRNA shape, replacing the anticodon stem-loop with SmpB. tmRNA is encoded by the ssrA gene; the 2 termini fold to resemble tRNA(Ala) and it encodes a 'tag peptide', a short internal open reading frame. During trans-translation Ala-aminoacylated tmRNA acts like a tRNA, entering the A-site of stalled ribosomes, displacing the stalled mRNA. The ribosome then switches to translate the ORF on the tmRNA; the nascent peptide is terminated with the 'tag peptide' encoded by the tmRNA and targeted for degradation. The ribosome is freed to recommence translation, which seems to be the essential function of trans-translation. The chain is SsrA-binding protein from Shewanella amazonensis (strain ATCC BAA-1098 / SB2B).